The chain runs to 155 residues: Nucleoside diphosphate kinase, cytosolic (155 aa).

Positions 16, 64, 92, 98, 109, and 119 each coordinate ATP. Histidine 122 acts as the Pros-phosphohistidine intermediate in catalysis.

This sequence belongs to the NDK family. As to quaternary structure, homohexamer. It depends on Mg(2+) as a cofactor.

The protein localises to the cytoplasm. It carries out the reaction a 2'-deoxyribonucleoside 5'-diphosphate + ATP = a 2'-deoxyribonucleoside 5'-triphosphate + ADP. It catalyses the reaction a ribonucleoside 5'-diphosphate + ATP = a ribonucleoside 5'-triphosphate + ADP. Major role in the synthesis of nucleoside triphosphates other than ATP. This Dictyostelium discoideum (Social amoeba) protein is Nucleoside diphosphate kinase, cytosolic (ndkC-1).